The sequence spans 474 residues: NAD(P) transhydrogenase subunit beta (474 aa).

9 helical membrane passes run 4–24, 46–66, 83–103, 132–152, 181–200, 202–222, 229–249, 253–273, and 321–341; these read GLVQAAYILAALLFIMSLAGL, IATIFGPHSEGTFWIIIAMII, MPELVAILHSFVGLAAVLVGF, VLTNIHNVEVFLGIFIGAVTF, LAALVVSALLMVAFLNNPES, FPVLLMTAIALAFGWHLVASI, VVVSMLNSYSGWAAAAAGFIL, LLIVTGALVGSSGAILSYIMC, and VIITPGYGMAVAQAQYPVADI.

It belongs to the PNT beta subunit family. Heterodimer of an alpha and a beta chain.

It is found in the cell inner membrane. It carries out the reaction NAD(+) + NADPH + H(+)(in) = NADH + NADP(+) + H(+)(out). Its function is as follows. The transhydrogenation between NADH and NADP is coupled to respiration and ATP hydrolysis and functions as a proton pump across the membrane. This chain is NAD(P) transhydrogenase subunit beta (pntB), found in Haemophilus influenzae (strain ATCC 51907 / DSM 11121 / KW20 / Rd).